The following is a 528-amino-acid chain: Phosphoenolpyruvate carboxykinase (ATP) (528 aa).

Substrate is bound by residues R56, Y192, and K198. Residues K198, H217, and 233 to 241 (GLSGTGKTT) contribute to the ATP site. K198 and H217 together coordinate Mn(2+). D254 is a Mn(2+) binding site. E282, R319, and T444 together coordinate ATP. R319 serves as a coordination point for substrate.

Belongs to the phosphoenolpyruvate carboxykinase (ATP) family. It depends on Mn(2+) as a cofactor.

The protein localises to the cytoplasm. It catalyses the reaction oxaloacetate + ATP = phosphoenolpyruvate + ADP + CO2. Its pathway is carbohydrate biosynthesis; gluconeogenesis. Involved in the gluconeogenesis. Catalyzes the conversion of oxaloacetate (OAA) to phosphoenolpyruvate (PEP) through direct phosphoryl transfer between the nucleoside triphosphate and OAA. This chain is Phosphoenolpyruvate carboxykinase (ATP), found in Bacillus cytotoxicus (strain DSM 22905 / CIP 110041 / 391-98 / NVH 391-98).